A 227-amino-acid chain; its full sequence is Pyridoxine/pyridoxamine 5'-phosphate oxidase (227 aa).

Substrate contacts are provided by residues 23-26 (RREY) and K81. FMN contacts are provided by residues 76–81 (RIVLLK), 91–92 (YT), R97, K98, and Q120. Substrate contacts are provided by Y138, R142, and S146. FMN contacts are provided by residues 155 to 156 (QS) and W200. 206–208 (RLH) serves as a coordination point for substrate. R210 is a binding site for FMN.

It belongs to the pyridoxamine 5'-phosphate oxidase family. Homodimer. It depends on FMN as a cofactor.

It catalyses the reaction pyridoxamine 5'-phosphate + O2 + H2O = pyridoxal 5'-phosphate + H2O2 + NH4(+). It carries out the reaction pyridoxine 5'-phosphate + O2 = pyridoxal 5'-phosphate + H2O2. The protein operates within cofactor metabolism; pyridoxal 5'-phosphate salvage; pyridoxal 5'-phosphate from pyridoxamine 5'-phosphate: step 1/1. It participates in cofactor metabolism; pyridoxal 5'-phosphate salvage; pyridoxal 5'-phosphate from pyridoxine 5'-phosphate: step 1/1. Functionally, catalyzes the oxidation of either pyridoxine 5'-phosphate (PNP) or pyridoxamine 5'-phosphate (PMP) into pyridoxal 5'-phosphate (PLP). The chain is Pyridoxine/pyridoxamine 5'-phosphate oxidase from Pectobacterium atrosepticum (strain SCRI 1043 / ATCC BAA-672) (Erwinia carotovora subsp. atroseptica).